We begin with the raw amino-acid sequence, 86 residues long: U15-lycotoxin-Ls1d (86 aa).

An N-terminal signal peptide occupies residues 1-20 (MNSKIFAVLLLLALLSCVLS). Residues 21-66 (DQYCPKSSITACKKMNIRNDCCKDDDCTGGSWCCATPCGNFCKYPT) form the WAP domain. 5 disulfide bridges follow: cysteine 24–cysteine 54, cysteine 32–cysteine 58, cysteine 41–cysteine 53, cysteine 42–cysteine 80, and cysteine 47–cysteine 62.

The protein belongs to the venom protein 11 family. 01 (wap-1) subfamily. Post-translationally, contains 5 disulfide bonds. As to expression, expressed by the venom gland.

The protein resides in the secreted. In terms of biological role, has antibacterial activity. The chain is U15-lycotoxin-Ls1d from Lycosa singoriensis (Wolf spider).